The sequence spans 381 residues: Spindlin interactor and repressor of chromatin-binding protein (381 aa).

Residues 42–73 (RVTQQEKTPPPRPSPLEAGSDGCEEPKQQVSW) are disordered. Lys-48 is covalently cross-linked (Glycyl lysine isopeptide (Lys-Gly) (interchain with G-Cter in SUMO2)). Residues Ser-121 and Ser-148 each carry the phosphoserine modification. Disordered regions lie at residues 144–264 (AEQP…EVRH), 283–320 (QLRGPDSKDSPKDREVAEGGLPRAESPSPAPPPGLRGT), and 339–381 (LQDW…GNGV). Glycyl lysine isopeptide (Lys-Gly) (interchain with G-Cter in SUMO2) cross-links involve residues Lys-189 and Lys-220. Residues 218–228 (RWKEPPGEEPV) are compositionally biased toward basic and acidic residues. Phosphoserine occurs at positions 248 and 251. The segment covering 287–299 (PDSKDSPKDREVA) has biased composition (basic and acidic residues). Residues Lys-290 and Lys-294 each participate in a glycyl lysine isopeptide (Lys-Gly) (interchain with G-Cter in SUMO2) cross-link. Phosphoserine occurs at positions 308 and 310. Lys-374 is covalently cross-linked (Glycyl lysine isopeptide (Lys-Gly) (interchain with G-Cter in SUMO2)).

As to quaternary structure, interacts with SPIN1, SPIN2A, SPIN2B, SPIN3 and SPIN4. Interacts with TCF7L2 in a SPIN1-dependent manner. Interacts with PARP1; promoting PARP1 ADP-ribosyltransferase activity.

The protein localises to the nucleus. It localises to the chromosome. Chromatin protein that stabilizes SPIN1 and enhances its association with histone H3 trimethylated at both 'Lys-4' and 'Lys-9' (H3K4me3K9me3). Positively regulates poly-ADP-ribosylation in response to DNA damage; acts by facilitating PARP1 ADP-ribosyltransferase activity. The chain is Spindlin interactor and repressor of chromatin-binding protein from Homo sapiens (Human).